Consider the following 208-residue polypeptide: Uracil phosphoribosyltransferase (208 aa).

5-phospho-alpha-D-ribose 1-diphosphate-binding positions include R78, R103, and 130–138 (DPMLATGGS). Residues I193 and 198–200 (GDA) contribute to the uracil site. A 5-phospho-alpha-D-ribose 1-diphosphate-binding site is contributed by D199.

This sequence belongs to the UPRTase family. Requires Mg(2+) as cofactor.

It catalyses the reaction UMP + diphosphate = 5-phospho-alpha-D-ribose 1-diphosphate + uracil. The protein operates within pyrimidine metabolism; UMP biosynthesis via salvage pathway; UMP from uracil: step 1/1. Its activity is regulated as follows. Allosterically activated by GTP. Its function is as follows. Catalyzes the conversion of uracil and 5-phospho-alpha-D-ribose 1-diphosphate (PRPP) to UMP and diphosphate. This chain is Uracil phosphoribosyltransferase, found in Shewanella halifaxensis (strain HAW-EB4).